We begin with the raw amino-acid sequence, 506 residues long: Lysine--tRNA ligase (506 aa).

Residues Glu-415 and Glu-422 each contribute to the Mg(2+) site.

The protein belongs to the class-II aminoacyl-tRNA synthetase family. Homodimer. It depends on Mg(2+) as a cofactor.

It localises to the cytoplasm. The enzyme catalyses tRNA(Lys) + L-lysine + ATP = L-lysyl-tRNA(Lys) + AMP + diphosphate. In Buchnera aphidicola subsp. Acyrthosiphon pisum (strain APS) (Acyrthosiphon pisum symbiotic bacterium), this protein is Lysine--tRNA ligase (lysS).